Reading from the N-terminus, the 85-residue chain is Small ribosomal subunit protein uS17 (85 aa).

Belongs to the universal ribosomal protein uS17 family. As to quaternary structure, part of the 30S ribosomal subunit.

Its function is as follows. One of the primary rRNA binding proteins, it binds specifically to the 5'-end of 16S ribosomal RNA. This Mycoplasmoides gallisepticum (strain R(low / passage 15 / clone 2)) (Mycoplasma gallisepticum) protein is Small ribosomal subunit protein uS17.